Reading from the N-terminus, the 86-residue chain is YcgL domain-containing protein XCC3997 (86 aa).

The region spanning 1-83 (MHAYVYKSQR…PKTVVLAGEC (83 aa)) is the YcgL domain.

This Xanthomonas campestris pv. campestris (strain ATCC 33913 / DSM 3586 / NCPPB 528 / LMG 568 / P 25) protein is YcgL domain-containing protein XCC3997.